Here is a 148-residue protein sequence, read N- to C-terminus: Deoxyuridine 5'-triphosphate nucleotidohydrolase (148 aa).

Substrate is bound by residues 67–69 (RSG), N80, 84–86 (LID), and M94.

Belongs to the dUTPase family. It depends on Mg(2+) as a cofactor.

The enzyme catalyses dUTP + H2O = dUMP + diphosphate + H(+). It functions in the pathway pyrimidine metabolism; dUMP biosynthesis; dUMP from dCTP (dUTP route): step 2/2. Functionally, this enzyme is involved in nucleotide metabolism: it produces dUMP, the immediate precursor of thymidine nucleotides and it decreases the intracellular concentration of dUTP so that uracil cannot be incorporated into DNA. The polypeptide is Deoxyuridine 5'-triphosphate nucleotidohydrolase (Paraburkholderia xenovorans (strain LB400)).